The chain runs to 231 residues: Putative N-acetylmannosamine-6-phosphate 2-epimerase (231 aa).

Belongs to the NanE family.

It catalyses the reaction an N-acyl-D-glucosamine 6-phosphate = an N-acyl-D-mannosamine 6-phosphate. It functions in the pathway amino-sugar metabolism; N-acetylneuraminate degradation; D-fructose 6-phosphate from N-acetylneuraminate: step 3/5. Functionally, converts N-acetylmannosamine-6-phosphate (ManNAc-6-P) to N-acetylglucosamine-6-phosphate (GlcNAc-6-P). The sequence is that of Putative N-acetylmannosamine-6-phosphate 2-epimerase from Listeria innocua serovar 6a (strain ATCC BAA-680 / CLIP 11262).